The sequence spans 118 residues: Succinate dehydrogenase assembly factor 1, mitochondrial (118 aa).

Residues Leu14–Arg16 carry the LYR motif 1; required for interaction with HSC20 motif. The short motif at Leu53–Arg55 is the LYR motif 2; not required for interaction with HSC20 element. Residues Leu53–Arg65 are interaction with SDHB. A disordered region spans residues His68 to Arg118. Positions Arg94–Arg118 are enriched in basic and acidic residues.

This sequence belongs to the complex I LYR family. SDHAF1 subfamily. Interacts with SDHB within an SDHA-SDHB subcomplex. Also interacts with the iron-sulfur transfer complex formed by HSC20, HSPA9 and ISCU through direct binding to HSC20. Binding of SDHAF1 to SDHB precedes and is necessary for recruitment of the iron-sulfur transfer complex by SDHAF1.

The protein localises to the mitochondrion matrix. Plays an essential role in the assembly of succinate dehydrogenase (SDH), an enzyme complex (also referred to as respiratory complex II) that is a component of both the tricarboxylic acid (TCA) cycle and the mitochondrial electron transport chain, and which couples the oxidation of succinate to fumarate with the reduction of ubiquinone (coenzyme Q) to ubiquinol. Promotes maturation of the iron-sulfur protein subunit Sdhb of the SDH catalytic dimer, protecting it from the deleterious effects of oxidants. May act together with SDHAF3. Contributes to iron-sulfur cluster incorporation into SDHB by binding to SDHB and recruiting the iron-sulfur transfer complex formed by HSC20, HSPA9 and ISCU through direct binding to HSC20. The protein is Succinate dehydrogenase assembly factor 1, mitochondrial of Mus musculus (Mouse).